Consider the following 804-residue polypeptide: Mechanosensitive cation channel TMEM63A (804 aa).

Residues 1-51 (MTSSPFLDPWPSKAVFVRERLGLGERPNDSYCYNSAKNSTVLQGVTFGGIP) lie on the Extracellular side of the membrane. A glycan (N-linked (GlcNAc...) asparagine) is linked at Asn38. A helical transmembrane segment spans residues 52-74 (TVLLLDVSCFLFLILVFSIIRRR). The Cytoplasmic segment spans residues 75–133 (FWDYGRIALVSEAGSEARFQRLSSSSSGQQDFENELGCCPWLTAIFRLHDDQILEWCGE). Residues 134-166 (DAIHYLSFQRHIIFLLVVISFLSLCVILPVNLS) traverse the membrane as a helical segment. The Extracellular segment spans residues 167–190 (GDLLGKDPYSFGRTTIANLQTDND). The helical transmembrane segment at 191 to 216 (LLWLHTVFSVIYLFLTVGFMWHHTRS) threads the bilayer. At 217 to 415 (IRYKEESLVR…CWKNLSIQGV (199 aa)) the chain is on the cytoplasmic side. The interval 218–413 (RYKEESLVRQ…DICWKNLSIQ (196 aa)) is intracellular linker IL2; confers mechanosensitivity. Residues 416–443 (RWWLQWLGINFSLFVVLFFLTTPSIIMS) form a helical membrane-spanning segment. Residues 444–461 (TMDKFNVTKPIHALNNPV) are Extracellular-facing. Asn449 carries an N-linked (GlcNAc...) asparagine glycan. A helical transmembrane segment spans residues 462 to 489 (ISQFFPTLLLWSFSALLPSIVYYSTLLE). Residues 490–494 (SHWTR) lie on the Cytoplasmic side of the membrane. The helical transmembrane segment at 495 to 531 (SGENRIMVSKVYIFLIFMVLILPSLGLTSLDFFFRWL) threads the bilayer. At 532–553 (FDKTSSETSIRLECVFLPDQGA) the chain is on the extracellular side. A helical transmembrane segment spans residues 554-585 (FFVNYVIASAFIGSGMELLRLPGLILYTFRMI). Positions 554–585 (FFVNYVIASAFIGSGMELLRLPGLILYTFRMI) are gating helix. The Cytoplasmic portion of the chain corresponds to 586–605 (MAKTAADRRNVKQNQAFEYE). The chain crosses the membrane as a helical span at residues 606-623 (FGAMYAWMLCVFTVIMAY). The Extracellular portion of the chain corresponds to 624–627 (SITC). Residues 628–650 (PIIVPFGLIYILLKHMVDRHNLY) traverse the membrane as a helical segment. The Cytoplasmic segment spans residues 651–660 (FAYLPAKLEK). A helical membrane pass occupies residues 661-688 (RIHFAAVNQALAAPILCLFWLFFFSFLR). Residues 689-693 (LGLTA) lie on the Extracellular side of the membrane. A helical membrane pass occupies residues 694–708 (PATLFTFLVVLLTIL). At 709-804 (ACLLYTCFGC…GTAAYAYQES (96 aa)) the chain is on the cytoplasmic side. Ser738 is subject to Phosphoserine.

Belongs to the CSC1 (TC 1.A.17) family. In terms of assembly, monomer. In terms of processing, N-Glycosylated.

The protein localises to the lysosome membrane. The protein resides in the early endosome membrane. It localises to the cell membrane. It catalyses the reaction Ca(2+)(in) = Ca(2+)(out). Its function is as follows. Mechanosensitive cation channel with low conductance and high activation threshold. In contrast to TMEM63B, does not show phospholipid scramblase activity. Acts as a regulator of lysosomal morphology by mediating lysosomal mechanosensitivity. Important for the baby's first breath and respiration throughout life. Upon lung inflation conducts cation currents in alveolar type 1 and 2 cells triggering lamellar body exocytosis and surfactant secretion into airspace. Also acts as an osmosensitive cation channel preferentially activated by hypotonic stress. This is Mechanosensitive cation channel TMEM63A from Mus musculus (Mouse).